A 344-amino-acid chain; its full sequence is Adenine deaminase (344 aa).

Positions 24, 26, and 204 each coordinate Zn(2+). E207 (proton donor) is an active-site residue. Residue D285 coordinates Zn(2+). D286 serves as a coordination point for substrate.

This sequence belongs to the metallo-dependent hydrolases superfamily. Adenosine and AMP deaminases family. Adenine deaminase type 2 subfamily. Zn(2+) is required as a cofactor.

It carries out the reaction adenine + H2O + H(+) = hypoxanthine + NH4(+). Functionally, catalyzes the hydrolytic deamination of adenine to hypoxanthine. Plays an important role in the purine salvage pathway and in nitrogen catabolism. The chain is Adenine deaminase from Caulobacter vibrioides (strain ATCC 19089 / CIP 103742 / CB 15) (Caulobacter crescentus).